The chain runs to 217 residues: MSKITSSQVREHVKELLKYSNETKKRNFLETVELQVGLKNYDPQRDKRFSGSLKLPNCPRPNMSICIFGDAFDVDRAKSCGVDAMSVDDLKKLNKNKKLIKKLSKKYNAFIASEVLIKQVPRLLGPQLSKAGKFPTPVSHNDDLYGKVTDVRSTIKFQLKKVLCLAVAVGNVEMEEDVLVNQILMSVNFFVSLLKKNWQNVGSLVVKSSMGPAFRLY.

S2 is subject to N-acetylserine. Residue K47 is modified to N6-methyllysine; by RKM5. 2 positions are modified to phosphoserine: S79 and S86.

The protein belongs to the universal ribosomal protein uL1 family. As to quaternary structure, component of the large ribosomal subunit (LSU). Mature yeast ribosomes consist of a small (40S) and a large (60S) subunit. The 40S small subunit contains 1 molecule of ribosomal RNA (18S rRNA) and 33 different proteins (encoded by 57 genes). The large 60S subunit contains 3 rRNA molecules (25S, 5.8S and 5S rRNA) and 46 different proteins (encoded by 81 genes). uL1 forms part of the L1 stalk. N-terminally acetylated by acetyltransferase NatA.

The protein localises to the cytoplasm. Its function is as follows. Component of the ribosome, a large ribonucleoprotein complex responsible for the synthesis of proteins in the cell. The small ribosomal subunit (SSU) binds messenger RNAs (mRNAs) and translates the encoded message by selecting cognate aminoacyl-transfer RNA (tRNA) molecules. The large subunit (LSU) contains the ribosomal catalytic site termed the peptidyl transferase center (PTC), which catalyzes the formation of peptide bonds, thereby polymerizing the amino acids delivered by tRNAs into a polypeptide chain. The nascent polypeptides leave the ribosome through a tunnel in the LSU and interact with protein factors that function in enzymatic processing, targeting, and the membrane insertion of nascent chains at the exit of the ribosomal tunnel. uL1 forms part of the L1 stalk, a mobile element that plays a role in evacuating the exit-site tRNA. In Saccharomyces cerevisiae (strain ATCC 204508 / S288c) (Baker's yeast), this protein is Large ribosomal subunit protein uL1A.